Consider the following 162-residue polypeptide: Regulator of sigma D (162 aa).

This sequence belongs to the Rsd/AlgQ family. Interacts with RpoD.

The protein resides in the cytoplasm. In terms of biological role, binds RpoD and negatively regulates RpoD-mediated transcription activation by preventing the interaction between the primary sigma factor RpoD with the catalytic core of the RNA polymerase and with promoter DNA. May be involved in replacement of the RNA polymerase sigma subunit from RpoD to RpoS during the transition from exponential growth to the stationary phase. The protein is Regulator of sigma D of Salmonella typhi.